The chain runs to 892 residues: DNA mismatch repair protein MutS (892 aa).

Residue 607–614 (GPNMSGKS) coordinates ATP.

It belongs to the DNA mismatch repair MutS family.

This protein is involved in the repair of mismatches in DNA. It is possible that it carries out the mismatch recognition step. This protein has a weak ATPase activity. The chain is DNA mismatch repair protein MutS from Bacillus cereus (strain G9842).